The following is a 172-amino-acid chain: Probable phosphatase YqeG (172 aa).

Its function is as follows. Has low dephosphorylation activity on GMP and glucose-6-phosphate. The protein is Probable phosphatase YqeG (yqeG) of Bacillus subtilis (strain 168).